A 483-amino-acid chain; its full sequence is Betaine aldehyde dehydrogenase (483 aa).

K(+)-binding residues include Ile27 and Asp93. NAD(+) is bound at residue 149–151; it reads GAW. Catalysis depends on Lys161, which acts as the Charge relay system. 175 to 178 is an NAD(+) binding site; the sequence is KPSE. K(+) is bound at residue Val179. Residue 228-231 participates in NAD(+) binding; it reads SVPT. Position 243 (Val243) interacts with K(+). Glu249 (proton acceptor) is an active-site residue. NAD(+)-binding residues include Gly251, Cys283, and Glu380. Cys283 serves as the catalytic Nucleophile. At Cys283 the chain carries Cysteine sulfenic acid (-SOH). K(+) contacts are provided by Lys450 and Gly453. Glu457 acts as the Charge relay system in catalysis.

The protein belongs to the aldehyde dehydrogenase family. In terms of assembly, dimer of dimers. The cofactor is K(+).

It carries out the reaction betaine aldehyde + NAD(+) + H2O = glycine betaine + NADH + 2 H(+). Its pathway is amine and polyamine biosynthesis; betaine biosynthesis via choline pathway; betaine from betaine aldehyde: step 1/1. In terms of biological role, involved in the biosynthesis of the osmoprotectant glycine betaine. Catalyzes the irreversible oxidation of betaine aldehyde to the corresponding acid. The protein is Betaine aldehyde dehydrogenase of Cereibacter sphaeroides (strain KD131 / KCTC 12085) (Rhodobacter sphaeroides).